A 64-amino-acid chain; its full sequence is Putative neurotoxin-H (64 aa).

Residues 1–19 (MYATVTVTVLLLISSGIFC) form the signal peptide. 3 disulfide bridges follow: Cys-25-Cys-45, Cys-32-Cys-54, and Cys-36-Cys-56.

Expressed by the venom gland.

It localises to the secreted. The chain is Putative neurotoxin-H from Lychas mucronatus (Chinese swimming scorpion).